Here is a 245-residue protein sequence, read N- to C-terminus: tRNA pseudouridine synthase A (245 aa).

D52 functions as the Nucleophile in the catalytic mechanism. Y111 is a substrate binding site.

Belongs to the tRNA pseudouridine synthase TruA family. In terms of assembly, homodimer.

The enzyme catalyses uridine(38/39/40) in tRNA = pseudouridine(38/39/40) in tRNA. Formation of pseudouridine at positions 38, 39 and 40 in the anticodon stem and loop of transfer RNAs. This chain is tRNA pseudouridine synthase A, found in Ehrlichia canis (strain Jake).